The sequence spans 174 residues: ATP-dependent protease subunit HslV (174 aa).

The active site involves Thr-4. Positions 159, 162, and 165 each coordinate Na(+).

It belongs to the peptidase T1B family. HslV subfamily. In terms of assembly, a double ring-shaped homohexamer of HslV is capped on each side by a ring-shaped HslU homohexamer. The assembly of the HslU/HslV complex is dependent on binding of ATP.

It is found in the cytoplasm. The catalysed reaction is ATP-dependent cleavage of peptide bonds with broad specificity.. Allosterically activated by HslU binding. In terms of biological role, protease subunit of a proteasome-like degradation complex believed to be a general protein degrading machinery. This is ATP-dependent protease subunit HslV from Moorella thermoacetica (strain ATCC 39073 / JCM 9320).